Consider the following 21-residue polypeptide: Ferredoxin (21 aa).

Residues 2-21 (KVKVDADACIGCGVCVELCP) enclose the 4Fe-4S ferredoxin-type domain. [4Fe-4S] cluster-binding residues include Cys-10, Cys-13, and Cys-16.

As to quaternary structure, monomer. It depends on [4Fe-4S] cluster as a cofactor.

Functionally, ferredoxins are iron-sulfur proteins that transfer electrons in a wide variety of metabolic reactions. This is Ferredoxin (fdxA) from Pyrococcus woesei.